Here is a 344-residue protein sequence, read N- to C-terminus: L-threonine 3-dehydrogenase (344 aa).

Residue cysteine 42 coordinates Zn(2+). Residues threonine 44 and histidine 47 each act as charge relay system in the active site. Positions 67, 68, 97, 100, 103, and 111 each coordinate Zn(2+). NAD(+)-binding positions include isoleucine 179, aspartate 199, arginine 204, 266–268 (LGI), and 290–291 (IY).

Belongs to the zinc-containing alcohol dehydrogenase family. Homotetramer. Zn(2+) serves as cofactor.

It is found in the cytoplasm. It catalyses the reaction L-threonine + NAD(+) = (2S)-2-amino-3-oxobutanoate + NADH + H(+). The protein operates within amino-acid degradation; L-threonine degradation via oxydo-reductase pathway; glycine from L-threonine: step 1/2. In terms of biological role, catalyzes the NAD(+)-dependent oxidation of L-threonine to 2-amino-3-ketobutyrate. This is L-threonine 3-dehydrogenase from Mesorhizobium japonicum (strain LMG 29417 / CECT 9101 / MAFF 303099) (Mesorhizobium loti (strain MAFF 303099)).